The following is a 547-amino-acid chain: Chaperonin GroEL (547 aa).

ATP is bound by residues 30-33 (TLGP), Lys51, 87-91 (DGTTT), Gly415, 479-481 (NAA), and Asp495.

The protein belongs to the chaperonin (HSP60) family. In terms of assembly, forms a cylinder of 14 subunits composed of two heptameric rings stacked back-to-back. Interacts with the co-chaperonin GroES.

Its subcellular location is the cytoplasm. It catalyses the reaction ATP + H2O + a folded polypeptide = ADP + phosphate + an unfolded polypeptide.. Together with its co-chaperonin GroES, plays an essential role in assisting protein folding. The GroEL-GroES system forms a nano-cage that allows encapsulation of the non-native substrate proteins and provides a physical environment optimized to promote and accelerate protein folding. This is Chaperonin GroEL from Bordetella pertussis (strain Tohama I / ATCC BAA-589 / NCTC 13251).